Reading from the N-terminus, the 299-residue chain is DNA-binding transcriptional repressor CapW (299 aa).

Residues 1 to 84 (MESSGSSKVR…EFKPITKRSE (84 aa)) are winged HTH domain. The segment at 85 to 196 (ATRYLNELQR…IGRLDVLEHV (112 aa)) is WYL domain. The WYL domain occupies 120-200 (SRAIEADEVA…DVLEHVFSAK (81 aa)). The interval 145-189 (YQSMDAPEPQEWVLSPHALGFDGLRWHARAWCHARQVFRDFAIGR) is probable ligand-binding region. The interval 197 to 299 (FSAKPVDPLL…DRDGLQHLRR (103 aa)) is WCX domain.

In terms of assembly, homodimer.

Its function is as follows. Transcriptional regulator of a CBASS antivirus system. CBASS (cyclic oligonucleotide-based antiphage signaling system) provides immunity against bacteriophage. The CD-NTase protein synthesizes cyclic nucleotides in response to infection; these serve as specific second messenger signals. The signals activate a diverse range of effectors, leading to bacterial cell death and thus abortive phage infection. A type III CBASS system, part of a CapW-Cap6-Cap8-Cap7-CdnC-NucC locus. Binds specifically to palindromes that overlap the -10 site in the promoter of cap6, found beween found between the genes for divergently transcribed capW and cap6 (cognate DNA). Probably represses transcription bidirectionally from the promoter. Mutations that make it a constitutive repressor in E.coli do not change DNA-binding affinity. In Stenotrophomonas maltophilia (Pseudomonas maltophilia), this protein is DNA-binding transcriptional repressor CapW.